A 352-amino-acid polypeptide reads, in one-letter code: Zona pellucida-binding protein 2 (352 aa).

Residues 1–28 (MAGGGGRPCSPQRALLGMVAIMAVVAEA) form the signal peptide. Residues asparagine 110 and asparagine 309 are each glycosylated (N-linked (GlcNAc...) asparagine).

This sequence belongs to the zona pellucida-binding protein Sp38 family.

It is found in the secreted. The protein localises to the cytoplasmic vesicle. Its subcellular location is the secretory vesicle. It localises to the acrosome. Functionally, may be implicated in the gamete interaction during fertilization. The polypeptide is Zona pellucida-binding protein 2 (ZPBP2) (Gallus gallus (Chicken)).